The following is a 21-amino-acid chain: Protein YnfR (21 aa).

This Escherichia coli (strain K12) protein is Protein YnfR.